Consider the following 309-residue polypeptide: Probable copper-dependent oxygenase clz3 (309 aa).

Residues asparagine 9 and asparagine 249 are each glycosylated (N-linked (GlcNAc...) asparagine). A helical transmembrane segment spans residues 257 to 277; sequence FAVPLAAIAFIALIISGGYVI.

The protein belongs to the clz3 oxygenase family.

The protein resides in the membrane. Its pathway is secondary metabolite biosynthesis. Probable copper-dependent oxygenase; part of the gene cluster that mediates the biosynthesis of squalestatin S1 (SQS1, also known as zaragozic acid A), a heavily oxidized fungal polyketide that offers potent cholesterol lowering activity by targeting squalene synthase (SS). SQS1 is composed of a 2,8-dioxobicyclic[3.2.1]octane-3,4,5-tricarboxyclic acid core that is connected to two lipophilic polyketide arms. These initial steps feature the priming of an unusual benzoic acid starter unit onto the highly reducing polyketide synthase clz14, followed by oxaloacetate extension and product release to generate a tricarboxylic acid containing product. The phenylalanine ammonia lyase (PAL) clz10 and the acyl-CoA ligase clz12 are involved in transforming phenylalanine into benzoyl-CoA. The citrate synthase-like protein clz17 is involved in connecting the C-alpha-carbons of the hexaketide chain and oxaloacetate to afford the tricarboxylic acid unit. The potential hydrolytic enzymes, clz11 and clz13, are in close proximity to pks2 and may participate in product release. On the other side, the tetraketide arm is synthesized by a the squalestatin tetraketide synthase clz2 and enzymatically esterified to the core in the last biosynthetic step, by the acetyltransferase clz6. The biosynthesis of the tetraketide must involve 3 rounds of chain extension. After the first and second rounds methyl-transfer occurs, and in all rounds of extension the ketoreductase and dehydratase are active. The enoyl reductase and C-MeT of clz2 are not active in the final round of extension. The acetyltransferase clz6 appears to have a broad substrate selectivity for its acyl CoA substrate, allowing the in vitro synthesis of novel squalestatins. The biosynthesis of SQS1 requires several oxidative steps likely performed by oxidoreductases clz3, clz15 and clz16. Finally, in support of the identification of the cluster as being responsible for SQS1 production, the cluster contains a gene encoding a putative squalene synthase (SS) clz20, suggesting a likely mechanism for self-resistance. This Cochliobolus lunatus (Filamentous fungus) protein is Probable copper-dependent oxygenase clz3.